Consider the following 107-residue polypeptide: U1-lycotoxin-Ls1b (107 aa).

The N-terminal stretch at 1–20 (MMKVLVVIALLVTLISYSSS) is a signal peptide. Positions 21 to 41 (EGIDDLEADELLSLMANEQTR) are excised as a propeptide. Disulfide bonds link cysteine 44/cysteine 59, cysteine 51/cysteine 68, cysteine 58/cysteine 86, and cysteine 70/cysteine 84.

The protein belongs to the neurotoxin 19 (CSTX) family. 04 (U1-Lctx) subfamily. As to expression, expressed by the venom gland.

The protein resides in the secreted. The protein is U1-lycotoxin-Ls1b of Lycosa singoriensis (Wolf spider).